Consider the following 209-residue polypeptide: uncharacterized protein (209 aa).

Positions 1–11 are enriched in basic and acidic residues; it reads MMRTNAGKETK. The interval 1 to 20 is disordered; the sequence is MMRTNAGKETKGYNPAPADS.

This is an uncharacterized protein from Caenorhabditis elegans.